Here is a 706-residue protein sequence, read N- to C-terminus: Transcription factor 12 (706 aa).

Positions A25–G109 are disordered. 2 stretches are compositionally biased toward polar residues: residues P30–G48 and G56–F76. 3 positions are modified to phosphoserine: S47, S67, and S79. A compositionally biased stretch (basic and acidic residues) spans H81 to T93. Position 98 is a phosphoserine (S98). A Glycyl lysine isopeptide (Lys-Gly) (interchain with G-Cter in SUMO2) cross-link involves residue K110. A phosphoserine mark is found at S116 and S124. Residues L119–L140 form a leucine-zipper region. Disordered regions lie at residues L140–A222 and F249–T313. Positions A144–S163 are enriched in polar residues. K181 is covalently cross-linked (Glycyl lysine isopeptide (Lys-Gly) (interchain with G-Cter in SUMO2)). The Nuclear localization signal signature appears at K181–P188. Residues S256 to L269 are compositionally biased toward low complexity. Residues V282–P306 are compositionally biased toward polar residues. T313 carries the post-translational modification Phosphothreonine. Position 333 is a phosphoserine (S333). Disordered regions lie at residues P349–S392 and H520–M604. The span at T352–P363 shows a compositional bias: low complexity. Polar residues-rich tracts occupy residues V364–W376 and A383–S392. Phosphoserine is present on S392. 2 stretches are compositionally biased toward basic and acidic residues: residues I542–H554 and D560–V575. A Glycyl lysine isopeptide (Lys-Gly) (interchain with G-Cter in SUMO2) cross-link involves residue K543. At S564 the chain carries Phosphoserine. K574 participates in a covalent cross-link: Glycyl lysine isopeptide (Lys-Gly) (interchain with G-Cter in SUMO2). T581 carries the post-translational modification Phosphothreonine. A phosphoserine mark is found at S582 and S583. Residues P592–M604 show a composition bias toward basic and acidic residues. Positions E601–L654 constitute a bHLH domain. Residues K633 and K677 each participate in a glycyl lysine isopeptide (Lys-Gly) (interchain with G-Cter in SUMO2) cross-link. Residues Q656–S679 are class A specific domain. The interval E674–L706 is disordered. Positions S697–L706 are enriched in polar residues.

In terms of assembly, efficient DNA binding requires dimerization with another bHLH protein. Forms homo- or heterooligomers with myogenin, E12 and ITF2 proteins and RUNX1T1. Interacts with PTF1A. Interacts with NEUROD2. Interacts with BHLHA9. Widely expressed.

The protein localises to the nucleus. In terms of biological role, transcriptional regulator. Involved in the initiation of neuronal differentiation. Activates transcription by binding to the E box (5'-CANNTG-3'). May be involved in the functional network that regulates the development of the GnRH axis. The polypeptide is Transcription factor 12 (Tcf12) (Mus musculus (Mouse)).